The primary structure comprises 1140 residues: Rho GTPase-activating protein gacF (1140 aa).

8 disordered regions span residues 1–145 (MKTH…KPSR), 189–236 (ESDI…IEPI), 455–504 (INNN…STSF), 520–644 (EVQQ…GLES), 661–700 (ESSK…DEDE), 720–759 (ETND…NNIS), 773–927 (AKVT…STLS), and 952–1095 (TSSP…NHTN). 2 stretches are compositionally biased toward low complexity: residues 10–26 (LGGL…LKSF) and 35–71 (QQQQ…ASSS). A coiled-coil region spans residues 28–55 (TEEVIHEQQQQQQQHNNNNNNNNNHQRQ). The span at 72–82 (IEETSGYLSKT) shows a compositional bias: polar residues. Low complexity-rich tracts occupy residues 83-136 (SSSS…TSSP) and 193-222 (DNGS…SSSS). The Rho-GAP domain maps to 234 to 409 (EPISQSTEDY…RLIENYHSIF (176 aa)). Composition is skewed to low complexity over residues 456–475 (NNNS…SPYK) and 482–493 (PKSSPKLNNRNS). The span at 494 to 504 (ISPKLSSSTSF) shows a compositional bias: polar residues. Residues 517–548 (ISDEVQQEQQNQQQQQDEQQDEQQDEQQDEQQ) adopt a coiled-coil conformation. Low complexity predominate over residues 520–533 (EVQQEQQNQQQQQD). Positions 534-549 (EQQDEQQDEQQDEQQD) are enriched in acidic residues. Residues 550-566 (EQNSNSTSINTSSSSIT) are compositionally biased toward low complexity. Residues 572–596 (STVQYLNRINTCRRPSSWTNNNRIK) are compositionally biased toward polar residues. Over residues 597–606 (QQQHHHHHHQ) the composition is skewed to basic residues. The span at 607–631 (QQQQHQQHQQQQSSSSESNSSLTSS) shows a compositional bias: low complexity. 2 stretches are compositionally biased toward polar residues: residues 632 to 641 (PQKRLNSVNG) and 672 to 684 (NRQM…NNIG). The span at 724-759 (DNNNNDQINNSNSSNNIPKTTITTTTNNTTTTNNIS) shows a compositional bias: low complexity. Positions 773-796 (AKVTPTPTPAPMQTSSFLSTKQTN) are enriched in polar residues. A compositionally biased stretch (low complexity) spans 797 to 822 (SPSSSSSPSSTVSSTSSSPSSSLSSS). Residues 823–854 (IDNKTMSNVNYNRFQPANRTVSSPNVRNFSVP) are compositionally biased toward polar residues. 3 stretches are compositionally biased toward low complexity: residues 891–914 (KPKN…NSTP), 952–1058 (TSSP…TSST), and 1065–1079 (HSNS…SSSS).

The protein resides in the cytoplasm. Rho GTPase-activating protein involved in the signal transduction pathway. This chain is Rho GTPase-activating protein gacF (gacF), found in Dictyostelium discoideum (Social amoeba).